Here is a 202-residue protein sequence, read N- to C-terminus: ATP-dependent Clp protease proteolytic subunit (202 aa).

Serine 101 functions as the Nucleophile in the catalytic mechanism. Histidine 126 is a catalytic residue.

Belongs to the peptidase S14 family. As to quaternary structure, component of the chloroplastic Clp protease core complex.

Its subcellular location is the plastid. The protein resides in the chloroplast stroma. The enzyme catalyses Hydrolysis of proteins to small peptides in the presence of ATP and magnesium. alpha-casein is the usual test substrate. In the absence of ATP, only oligopeptides shorter than five residues are hydrolyzed (such as succinyl-Leu-Tyr-|-NHMec, and Leu-Tyr-Leu-|-Tyr-Trp, in which cleavage of the -Tyr-|-Leu- and -Tyr-|-Trp bonds also occurs).. Functionally, cleaves peptides in various proteins in a process that requires ATP hydrolysis. Has a chymotrypsin-like activity. Plays a major role in the degradation of misfolded proteins. This is ATP-dependent Clp protease proteolytic subunit from Illicium oligandrum (Star anise).